The sequence spans 37 residues: Large ribosomal subunit protein bL36c (37 aa).

This sequence belongs to the bacterial ribosomal protein bL36 family.

Its subcellular location is the plastid. The sequence is that of Large ribosomal subunit protein bL36c from Cuscuta gronovii (Common dodder).